The primary structure comprises 1108 residues: Probable E3 ubiquitin ligase SUD1 (1108 aa).

A disordered region spans residues 1-60; the sequence is MEISPADSLSISGAAASEVVSEPSVSSSSSSSSPNQASPNPFSNMDPAVSTATGSRYVDD. A compositionally biased stretch (low complexity) spans 10–44; the sequence is SISGAAASEVVSEPSVSSSSSSSSPNQASPNPFSN. An RING-CH-type zinc finger spans residues 60-121; that stretch reads DDEDEEDVCR…EVCKHPFSFS (62 aa). Cys68, Cys71, Cys85, Cys87, His95, Cys98, Cys111, and Cys114 together coordinate Zn(2+). A run of 2 helical transmembrane segments spans residues 157–177 and 197–217; these read FVLSVWLLTIPFITFWIWRLA and VILTDCLHGFLLSASIVFIFL. Residues 237–246 show a composition bias toward basic and acidic residues; sequence ERDDDVDRNG. The tract at residues 237–273 is disordered; sequence ERDDDVDRNGARAARRPAGQANRNLAGEGNGEDAGDQ. A coiled-coil region spans residues 286–308; the sequence is ENVLARLDIQAARLEAQVEQMFD. The next 8 helical transmembrane spans lie at 339 to 359, 362 to 382, 462 to 482, 489 to 509, 525 to 545, 572 to 592, 630 to 650, and 669 to 689; these read FTVLASNMIFLGVVIFVPFTL, IILYHVSWLFAAARGPAVAAS, AVGYMFIVFLVFLYLGIIALI, PLTVGRFYGIASIVEAVPSLL, VAFLLVIELGVFPLMCGWWLD, LVHWVVGIMYMLQISIFVSLL, VLLSVAVYGSLIVMLVFLPVK, and PFTEIPADMLLFQICIPFIIE. The segment at 762-784 is disordered; the sequence is PNRSRLRAGNVNTGEEYEDDDEQ. Helical transmembrane passes span 796–816, 844–864, 894–914, 923–943, 982–1002, and 1017–1036; these read IILLLLVAWVTLLLFNSALIV, YAFVIGTYAFWTTISGARYAI, AIWVFIIPVLIGLLFELLVIV, SPVFLLYQDWALGLIFLKIWT, EIVFPIVMKLLTALCVPYVLA, and SAVYRFAWIGCLSVSLFCFC.

In terms of tissue distribution, expressed in cotyledons, leaves, roots, stems, inflorescences and siliques. Expression higher at the top than at the base of the stem.

Its subcellular location is the membrane. The enzyme catalyses S-ubiquitinyl-[E2 ubiquitin-conjugating enzyme]-L-cysteine + [acceptor protein]-L-lysine = [E2 ubiquitin-conjugating enzyme]-L-cysteine + N(6)-ubiquitinyl-[acceptor protein]-L-lysine.. It participates in protein modification; protein ubiquitination. Its function is as follows. Probable E3 ubiquitin ligase acting as a positive post-transcriptional regulator of 3-hydroxy-3-methylglutaryl-coenzyme A reductase activity. Might be involved in the quality control that degrades misfolded proteins. This is Probable E3 ubiquitin ligase SUD1 (SUD1) from Arabidopsis thaliana (Mouse-ear cress).